Here is a 214-residue protein sequence, read N- to C-terminus: Adenylate kinase (214 aa).

10–15 (GAGKGT) is a binding site for ATP. Positions 30–59 (STGDMLRAAVKSGSELGKQAKDIMDAGKLV) are NMP. Residues threonine 31, arginine 36, 57–59 (KLV), 85–88 (GFPR), and glutamine 92 contribute to the AMP site. The interval 122-159 (GRRVHAPSGRVYHVKFNPPKVEGKDDVTGEELTTRKDD) is LID. Residues arginine 123 and 132-133 (VY) each bind ATP. Residues arginine 156 and arginine 167 each contribute to the AMP site. N6-acetyllysine is present on lysine 192. Residue lysine 200 coordinates ATP.

Belongs to the adenylate kinase family. As to quaternary structure, monomer.

It is found in the cytoplasm. It carries out the reaction AMP + ATP = 2 ADP. Its pathway is purine metabolism; AMP biosynthesis via salvage pathway; AMP from ADP: step 1/1. Its function is as follows. Catalyzes the reversible transfer of the terminal phosphate group between ATP and AMP. Plays an important role in cellular energy homeostasis and in adenine nucleotide metabolism. This chain is Adenylate kinase, found in Escherichia coli O8 (strain IAI1).